The chain runs to 152 residues: UPF0756 membrane protein Daud_1310 (152 aa).

The next 4 membrane-spanning stretches (helical) occupy residues 14–34 (LVGV…LLFI), 51–71 (LELG…NGKI), 76–96 (IIYN…ALAT), and 112–132 (IIFG…GMPV).

It belongs to the UPF0756 family.

Its subcellular location is the cell membrane. In Desulforudis audaxviator (strain MP104C), this protein is UPF0756 membrane protein Daud_1310.